The following is a 455-amino-acid chain: Xylan O-acetyltransferase 3 (455 aa).

The segment covering 1-15 (MSKPQQQSPPSTTTT) has biased composition (low complexity). The tract at residues 1–32 (MSKPQQQSPPSTTTTSPPPPPPSTPPPASSSR) is disordered. Residues 1–42 (MSKPQQQSPPSTTTTSPPPPPPSTPPPASSSRSLLSALRRSP) are Cytoplasmic-facing. The segment covering 16–28 (SPPPPPPSTPPPA) has biased composition (pro residues). Residues 43 to 59 (VTTLVAAFFLLALFMYG) traverse the membrane as a helical; Signal-anchor for type II membrane protein segment. The Lumenal portion of the chain corresponds to 60–455 (EDVRTLAELS…PSTHPSLPPQ (396 aa)). N-linked (GlcNAc...) asparagine glycans are attached at residues N82, N107, and N146. Disulfide bonds link C96-C147, C118-C183, C127-C423, and C339-C419. Positions 170–172 (GDS) match the GDS motif motif. S172 serves as the catalytic Nucleophile. Residues N278 and N348 are each glycosylated (N-linked (GlcNAc...) asparagine). Catalysis depends on D418, which acts as the Proton donor. The DXXH motif signature appears at 418–421 (DCIH). Catalysis depends on H421, which acts as the Proton acceptor.

The protein belongs to the PC-esterase family. TBL subfamily. As to expression, highly expressed in leaves. Expressed in roots, stems and inflorescences.

It localises to the golgi apparatus membrane. Its function is as follows. Xylan acetyltransferase required for 2-O- and 3-O-monoacetylation of xylosyl residues in xylan. Catalyzes the 2-O-acetylation of xylan, followed by nonenzymatic acetyl migration to the O-3 position, resulting in products that are monoacetylated at both O-2 and O-3 positions. This chain is Xylan O-acetyltransferase 3, found in Oryza sativa subsp. japonica (Rice).